The following is a 28-amino-acid chain: Kappa-stichotoxin-Shd1a/kappa-stichotoxin-Shd1b (28 aa).

The residue at position 6 (proline 6) is a 4-hydroxyproline; in form SHTX-1 (Shd1a). Disulfide bonds link cysteine 7/cysteine 19 and cysteine 10/cysteine 25.

The protein belongs to the sea anemone BBH family. Post-translationally, occurs in 2 forms which differ in the post-translational modification of Pro-6. In form SHTX-1 (Shd1a) Pro-6 is a hydroxyproline while in form SHTX-2 (Shd1b) Pro-6 is unmodified.

It is found in the secreted. It localises to the nematocyst. Functionally, kappa-stichotoxin-Shd1a: inhibits voltage-gated potassium channels (Kv). Its function is as follows. Kappa-stichotoxin-Shd1b: inhibits voltage-gated potassium channels (Kv). This toxin inhibits the binding of 125I-alpha-dendrotoxin to synaptosomal membranes (IC(50)=270 nM). The chain is Kappa-stichotoxin-Shd1a/kappa-stichotoxin-Shd1b from Stichodactyla haddoni (Saddle carpet anemone).